The sequence spans 131 residues: MKRYLTWIVAAELLFATGNLHANEVEVEVPGLLTDHTVSSIGHEFYRAFSDKWESEYTGNLTINERPSARWGSWITITVNQDVIFQTFLFPMKRDFEKTVVFALAQTEEALNRRQIDQTLLSTSDLARDEF.

An N-terminal signal peptide occupies residues 1-22 (MKRYLTWIVAAELLFATGNLHA).

In terms of biological role, may be involved in the biogenesis of curli organelles. The polypeptide is Curli production assembly/transport component CsgE (csgE) (Salmonella typhi).